Here is a 490-residue protein sequence, read N- to C-terminus: JNK-interacting protein 1 (490 aa).

Disordered stretches follow at residues 1–71 (MADS…DHEP) and 213–254 (EDSS…PVSQ). Polar residues predominate over residues 231–249 (GHSTAHSPNDFKSMSPQIT). Residues 271–332 (MLEATHRGLH…PSAYAVDLDY (62 aa)) enclose the SH3 domain. The PID domain maps to 344 to 479 (KERYLLGYLG…FQRFYQKFIE (136 aa)).

It belongs to the JIP scaffold family. In terms of assembly, forms homo- and heterooligomeric complexes. Binds Hep, a dual specificity protein kinase in the JNK pathway, but not its downstream target bsk. The C-terminal region interacts with the kinesin light chain protein, Klc, and the C-terminal PTY motif of amyloid-beta protein precursor-like protein, Appl. Expressed in the brain, CNS, PNS and cells posterior to the morphogenetic furrow in the eye imaginal disk of late embryos.

Its subcellular location is the cytoplasm. Functionally, the JNK-interacting protein (JIP) group of scaffold proteins selectively mediates JNK signaling by aggregating specific components of the MAPK cascade to form a functional JNK signaling module. May function as a regulator of vesicle transport, through interactions with the JNK-signaling components and motor proteins. In Drosophila melanogaster (Fruit fly), this protein is JNK-interacting protein 1 (Aplip1).